A 332-amino-acid chain; its full sequence is MVCTTLYTVCVILCILLMYIILFRKMIHFLIDLSLIAFVISSCIRLSNAQFFANDMLYNGNVEGVINTTNIFNVESLCIYFPNSAVGRPGPGKSDGLINDNNYAQTLAVLFETKGFPKGSVNFNTYTKISDFINSIEMTCSYNIVIIPETLANSETIEQVAEWVLNVWKCDNMNVDIYTYEQIGKDNFWAAFGEDCDVAVCPLDTTMNGIGCTPASTETYEVLSNDTQLALIDVVDNVKHRIQLNQVTCKLRNCVKGEARLNTAIVRISNLSSFDNSLSPLNNGQKTRSFKINAKKWWKIFYTIIDYINTFIQSMTPRHRAIYPEGWMLRYA.

A signal peptide spans 1–49 (MVCTTLYTVCVILCILLMYIILFRKMIHFLIDLSLIAFVISSCIRLSNA).

Belongs to the rotavirus VP7 family. In terms of assembly, homotrimer; disulfide-linked. 2 Ca(2+) ions bound at each subunit interface in the trimer hold the trimer together. Interacts with the intermediate capsid protein VP6. Interacts with the outer capsid protein VP5*. Post-translationally, N-glycosylated. Intramolecular disulfide bonds.

It is found in the virion. Its subcellular location is the host endoplasmic reticulum lumen. In terms of biological role, calcium-binding protein that interacts with rotavirus cell receptors once the initial attachment by VP4 has been achieved. Rotavirus attachment and entry into the host cell probably involves multiple sequential contacts between the outer capsid proteins VP4 and VP7, and the cell receptors. Following entry into the host cell, low intracellular or intravesicular Ca(2+) concentration probably causes the calcium-stabilized VP7 trimers to dissociate from the virion. This step is probably necessary for the membrane-disrupting entry step and the release of VP4, which is locked onto the virion by VP7. This is Outer capsid glycoprotein VP7 from Rotavirus C (isolate RVC/Cow/Japan/Shintoku/1991/G2P[3]) (RV-C).